We begin with the raw amino-acid sequence, 562 residues long: Urocanate hydratase (562 aa).

NAD(+) contacts are provided by residues 52-53 (GG), Gln-130, 176-178 (GMG), Glu-196, Arg-201, 242-243 (NA), 263-267 (QTSAH), 273-274 (YL), and Tyr-322. Cys-410 is a catalytic residue. Gly-492 is a binding site for NAD(+).

Belongs to the urocanase family. Requires NAD(+) as cofactor.

The protein localises to the cytoplasm. It catalyses the reaction 4-imidazolone-5-propanoate = trans-urocanate + H2O. It participates in amino-acid degradation; L-histidine degradation into L-glutamate; N-formimidoyl-L-glutamate from L-histidine: step 2/3. Its function is as follows. Catalyzes the conversion of urocanate to 4-imidazolone-5-propionate. This Klebsiella pneumoniae (strain 342) protein is Urocanate hydratase.